A 295-amino-acid chain; its full sequence is MTARIIDGKIISADLRGRVAAEVTRIKAEHGITPGLAVVLVGSDPASEVYVRSKHKQTQEAGMASFEHRLPADVAQADLLALIGQLNADPAVHGILVQLPLPKGLDSNAVIDAIDPAKDVDGLNPVNAGRLASGLFALTPCTPLGCIIMAKQVHASLEGMNAIVIGRSNLVGKPLVQLLLNENATVTIAHSRSRDLPALCRQADLVFAAVGKAEMVKGDWIKPGATVIDVGINRTPSPDGGKDKLVGDVAFHEAKDVAGAITPVPGGVGLMTVACLLVNTVRAASAIHGLPKPGV.

NADP(+) contacts are provided by residues 166–168 (GRS), Ser-191, and Ile-232.

The protein belongs to the tetrahydrofolate dehydrogenase/cyclohydrolase family. Homodimer.

It catalyses the reaction (6R)-5,10-methylene-5,6,7,8-tetrahydrofolate + NADP(+) = (6R)-5,10-methenyltetrahydrofolate + NADPH. It carries out the reaction (6R)-5,10-methenyltetrahydrofolate + H2O = (6R)-10-formyltetrahydrofolate + H(+). It functions in the pathway one-carbon metabolism; tetrahydrofolate interconversion. Functionally, catalyzes the oxidation of 5,10-methylenetetrahydrofolate to 5,10-methenyltetrahydrofolate and then the hydrolysis of 5,10-methenyltetrahydrofolate to 10-formyltetrahydrofolate. The chain is Bifunctional protein FolD from Rhodopseudomonas palustris (strain BisB5).